A 721-amino-acid chain; its full sequence is MGMIEPNRSVLLNGSMNGSENIKDLFHEDAQVSQLQSRPWWKIQLFVWEPVLFGTWDGVFTSCMINIFGVVLFLRTGWLVGNTGVLLGIVLVSFVILVALVTVLSGIGVCERCSIGSGGVYSMVSTVLGGKVGGTIGVLYIFGQCVAGAMYITGFAESISDLLNLENMWVVRGISLAVLVGLLGINLAGVKWIIRLQLLLFLLLAVSTLDFVIGSFTHLDPENGFVGYSEELLRNNTFPDYTPGESFFTVFGVFFPAATGVMVGFNMSGDLQRPSINIPLGSLAAIGTSWFLYVVFVFLLGAICTREFLRYEFMIAEKVSLVGGLFLLGLYISSLASCMGGLYGAPRILQCIAQEKVIPALSFLGRGKGPNKTPVAAIFITGLLTMAFVFIGQVNVLAPIVTINFMLTYSAVDYSYFSVTMSYKMQHSPKKNGRPNSRVMSSTQPLILNKSTSYGSNGTLLEFTKDMNQLFKPNHTEAPESTSSQEKDPKMFKFSKPRKPAKQTLQDSFQLDLHQGPEHGLESRLLVTDLAENESQNSKAEITEDKNQGVDPTESDEPDSEEDVDIQQPTEEQKGDSTVAQKVPEFEIQELSTSFYAKFCNHWVAFLGAILSIVIMFVIQWIYALVNLGVAIILYLYIGRVNPGLNPGAAANFSFFAWIRQGARTLCRKPHPKEQFVVTPSLLSVGMETTQLTEENEDFASRGRYHHSSIITQGQFIDRYN.

11 helical membrane passes run 53-73 (FGTWDGVFTSCMINIFGVVLF), 84-104 (GVLLGIVLVSFVILVALVTVL), 115-135 (IGSGGVYSMVSTVLGGKVGGT), 136-156 (IGVLYIFGQCVAGAMYITGFA), 174-194 (ISLAVLVGLLGINLAGVKWII), 196-216 (LQLLLFLLLAVSTLDFVIGSF), 247-267 (FFTVFGVFFPAATGVMVGFNM), 283-303 (LAAIGTSWFLYVVFVFLLGAI), 321-341 (LVGGLFLLGLYISSLASCMGG), 374-394 (PVAAIFITGLLTMAFVFIGQV), and 397-417 (LAPIVTINFMLTYSAVDYSYF). 2 disordered regions span residues 473-505 (PNHTEAPESTSSQEKDPKMFKFSKPRKPAKQTL) and 533-580 (NESQ…STVA). The segment covering 553-565 (TESDEPDSEEDVD) has biased composition (acidic residues). The next 2 helical transmembrane spans lie at 606 to 626 (FLGAILSIVIMFVIQWIYALV) and 628 to 648 (LGVAIILYLYIGRVNPGLNPG).

Belongs to the SLC12A transporter family.

It is found in the membrane. Cation/chloride cotransporter. In Xenopus laevis (African clawed frog), this protein is Solute carrier family 12 member 8 (slc12a8).